Here is a 440-residue protein sequence, read N- to C-terminus: Lipopolysaccharide-processing protein LpsZ (440 aa).

To E.coli capsule polysaccharide export protein KpsC.

The protein resides in the cytoplasm. Involved in the invasion of nitrogen fixation nodules. May be involved in the biosynthesis of lipopolysaccharides as an enzyme or a regulatory protein. The protein is Lipopolysaccharide-processing protein LpsZ (lpsZ) of Rhizobium meliloti (Ensifer meliloti).